A 371-amino-acid chain; its full sequence is Putative F-box protein At1g58090 (371 aa).

Residues 1 to 46 enclose the F-box domain; that stretch reads MVSKKLPLDLEEEILFRVPPRSLVRFRSVCREWNTLFKNKRFINKN.

The sequence is that of Putative F-box protein At1g58090 from Arabidopsis thaliana (Mouse-ear cress).